The following is a 338-amino-acid chain: Acetylcholinesterase (338 aa).

An N-linked (GlcNAc...) asparagine glycan is attached at asparagine 8. Serine 99 acts as the Acyl-ester intermediate in catalysis. Residues cysteine 153 and cysteine 164 are joined by a disulfide bond. The active-site Charge relay system is the glutamate 226.

The protein belongs to the type-B carboxylesterase/lipase family.

The protein resides in the synapse. Its subcellular location is the secreted. The protein localises to the cell membrane. The enzyme catalyses acetylcholine + H2O = choline + acetate + H(+). Functionally, terminates signal transduction at the neuromuscular junction by rapid hydrolysis of the acetylcholine released into the synaptic cleft. The polypeptide is Acetylcholinesterase (ache) (Myxine glutinosa (Atlantic hagfish)).